The following is a 188-amino-acid chain: Shikimate kinase (188 aa).

Residue 21–26 (GAGKTT) participates in ATP binding. T25 contributes to the Mg(2+) binding site. Residues D43, R67, and G90 each coordinate substrate. R130 serves as a coordination point for ATP. R148 lines the substrate pocket.

Belongs to the shikimate kinase family. Monomer. Mg(2+) serves as cofactor.

It is found in the cytoplasm. The catalysed reaction is shikimate + ATP = 3-phosphoshikimate + ADP + H(+). It functions in the pathway metabolic intermediate biosynthesis; chorismate biosynthesis; chorismate from D-erythrose 4-phosphate and phosphoenolpyruvate: step 5/7. Its function is as follows. Catalyzes the specific phosphorylation of the 3-hydroxyl group of shikimic acid using ATP as a cosubstrate. This chain is Shikimate kinase, found in Geobacillus thermodenitrificans (strain NG80-2).